Consider the following 601-residue polypeptide: Elongation factor 4 (601 aa).

The tr-type G domain maps to 6 to 188 (NYIRNFSIVA…AIVTQLPSPR (183 aa)). Residues 18–23 (DHGKST) and 135–138 (NKVD) contribute to the GTP site.

It belongs to the TRAFAC class translation factor GTPase superfamily. Classic translation factor GTPase family. LepA subfamily.

It localises to the cell inner membrane. The catalysed reaction is GTP + H2O = GDP + phosphate + H(+). Its function is as follows. Required for accurate and efficient protein synthesis under certain stress conditions. May act as a fidelity factor of the translation reaction, by catalyzing a one-codon backward translocation of tRNAs on improperly translocated ribosomes. Back-translocation proceeds from a post-translocation (POST) complex to a pre-translocation (PRE) complex, thus giving elongation factor G a second chance to translocate the tRNAs correctly. Binds to ribosomes in a GTP-dependent manner. The chain is Elongation factor 4 from Bartonella henselae (strain ATCC 49882 / DSM 28221 / CCUG 30454 / Houston 1) (Rochalimaea henselae).